The chain runs to 505 residues: Flagellin (505 aa).

It belongs to the bacterial flagellin family.

The protein resides in the secreted. The protein localises to the bacterial flagellum. In terms of biological role, flagellin is the subunit protein which polymerizes to form the filaments of bacterial flagella. The polypeptide is Flagellin (fliC) (Salmonella budapest).